Reading from the N-terminus, the 113-residue chain is Ribonuclease P protein component (113 aa).

Belongs to the RnpA family. As to quaternary structure, consists of a catalytic RNA component (M1 or rnpB) and a protein subunit.

It carries out the reaction Endonucleolytic cleavage of RNA, removing 5'-extranucleotides from tRNA precursor.. In terms of biological role, RNaseP catalyzes the removal of the 5'-leader sequence from pre-tRNA to produce the mature 5'-terminus. It can also cleave other RNA substrates such as 4.5S RNA. The protein component plays an auxiliary but essential role in vivo by binding to the 5'-leader sequence and broadening the substrate specificity of the ribozyme. This is Ribonuclease P protein component from Geotalea uraniireducens (strain Rf4) (Geobacter uraniireducens).